The following is a 617-amino-acid chain: E3 ubiquitin-protein ligase synoviolin (617 aa).

At 1 to 4 (MFRT) the chain is on the cytoplasmic side. Positions 1 to 84 (MFRTAVMMAA…EHLLERSWYA (84 aa)) are necessary and sufficient for SEL1L interaction. Positions 1 to 251 (MFRTAVMMAA…LFAIRPMYLA (251 aa)) are involved in FAM8A1 interaction. Residues 5–25 (AVMMAASLALTGAVVAHAYYL) form a helical membrane-spanning segment. At 26 to 41 (KHQFYPTVVYLTKSSP) the chain is on the lumenal side. The chain crosses the membrane as a helical span at residues 42 to 62 (SMAVLYIQAFVLVFLLGKVMG). The Cytoplasmic segment spans residues 63–98 (KVFFGQLRAAEMEHLLERSWYAVTETCLAFTVFRDD). The chain crosses the membrane as a helical span at residues 99-119 (FSPRFVALFTLLLFLKCFHWL). The Lumenal segment spans residues 120–140 (AEDRVDFMERSPNISWLFHCR). The helical transmembrane segment at 141–161 (IVSLMFLLGILDFLFVSHAYH) threads the bilayer. The Cytoplasmic portion of the chain corresponds to 162 to 169 (SILTRGAS). A helical membrane pass occupies residues 170–190 (VQLVFGFEYAILMTMVLTIFI). The Lumenal segment spans residues 191 to 224 (KYVLHSVDLQSENPWDNKAVYMLYTELFTGFIKV). Residues 225-245 (LLYMAFMTIMIKVHTFPLFAI) traverse the membrane as a helical segment. Residues 236–270 (KVHTFPLFAIRPMYLAMRQFKKAVTDAIMSRRAIR) are interaction with p53/TP53. The Cytoplasmic segment spans residues 246–617 (RPMYLAMRQF…LQKLESPVAH (372 aa)). Zn(2+)-binding residues include C291, C294, C307, H309, H312, C315, C326, and C329. The RING-type; atypical zinc-finger motif lies at 291–330 (CIICREEMVTGAKRLPCNHIFHTSCLRSWFQRQQTCPTCR). Disordered regions lie at residues 337 to 375 (SLPA…GLLP), 393 to 453 (PVPP…PAPG), and 535 to 617 (RPAT…PVAH). Positions 341-375 (QSPPPPEPADQGPPPAPHPPPLLPQPPNFPQGLLP) are enriched in pro residues. The span at 417–451 (PSGAATTTAAGTSATAASATASGPGSGSAPEAGPA) shows a compositional bias: low complexity. An HAF-H domain; necessary to form higher-order Hrd1 complexes region spans residues 480 to 535 (GFAGLTPEELRALEGHERQHLEARLQSLRNIHTLLDAAMLQINQYLTVLASLGPPR). A compositionally biased stretch (low complexity) spans 537 to 569 (ATSVNSTEETATTVVAAASSTSIPSSEATTPTP). Acidic residues predominate over residues 591–600 (EMPEDGEPDA). S613 is modified (phosphoserine).

Belongs to the HRD1 family. As to quaternary structure, homodimer. Interacts with p53/TP53. Interacts with HTT. Component of the HRD1 complex, which comprises at least SYNV1/HRD1, DERL1/2, FAM8A1, HERPUD1/HERP, OS9, SEL1L and UBE2J1. FAM8A1 is stabilized by interaction with SYNV1, which prevents its proteasomal degradation. OS9 and UBE2J1 recruitment to the complex may be mediated by SEL1L. SYNV1 assembles with SEL1L and FAM8A1 through its transmembrane domains, but interaction with its cytoplasmic domain is required to confer stability to FAM8A1 and enhance recruitment of HERPUD1. The HRD1 complex also associates with VIMP and may transfer misfolded proteins from the endoplasmic reticulum to VCP. May form a complex with ERLEC1, HSPA5, OS9 and SEL1L. Interacts with VCP. Interacts with UBXN6. Interacts with BAG6. Interacts with NFE2L1. Interacts (via N-terminus) with components of the pre-B cell receptor, including IGLL1 and VPREB1. Interacts with CREB3L3; this interaction leads to CREB3L3 ubiquitination and proteasomal degradation. In terms of processing, not N-glycosylated. Auto-ubiquitinated. Deubiquitinated by USP19. As to expression, ubiquitously expressed, with highest levels in liver and kidney (at protein level). Up-regulated in synovial tissues from patients with rheumatoid arthritis (at protein level).

The protein resides in the endoplasmic reticulum membrane. The catalysed reaction is S-ubiquitinyl-[E2 ubiquitin-conjugating enzyme]-L-cysteine + [acceptor protein]-L-lysine = [E2 ubiquitin-conjugating enzyme]-L-cysteine + N(6)-ubiquitinyl-[acceptor protein]-L-lysine.. The protein operates within protein modification; protein ubiquitination. In terms of biological role, E3 ubiquitin-protein ligase which accepts ubiquitin specifically from endoplasmic reticulum-associated UBC7 E2 ligase and transfers it to substrates, promoting their degradation. Component of the endoplasmic reticulum quality control (ERQC) system also called ER-associated degradation (ERAD) involved in ubiquitin-dependent degradation of misfolded endoplasmic reticulum proteins. Also promotes the degradation of normal but naturally short-lived proteins such as SGK. Protects cells from ER stress-induced apoptosis. Protects neurons from apoptosis induced by polyglutamine-expanded huntingtin (HTT) or unfolded GPR37 by promoting their degradation. Sequesters p53/TP53 in the cytoplasm and promotes its degradation, thereby negatively regulating its biological function in transcription, cell cycle regulation and apoptosis. Mediates the ubiquitination and subsequent degradation of cytoplasmic NFE2L1. During the early stage of B cell development, required for degradation of the pre-B cell receptor (pre-BCR) complex, hence supporting further differentiation into mature B cells. The polypeptide is E3 ubiquitin-protein ligase synoviolin (Homo sapiens (Human)).